The chain runs to 204 residues: GTP cyclohydrolase-2 (204 aa).

49–53 contacts GTP; it reads RIHSE. Positions 54, 65, and 67 each coordinate Zn(2+). GTP-binding positions include Gln70, 92-94, and Thr114; that span reads EGR. Residue Asp126 is the Proton acceptor of the active site. Arg128 acts as the Nucleophile in catalysis. GTP is bound by residues Thr149 and Lys154.

The protein belongs to the GTP cyclohydrolase II family. The cofactor is Zn(2+).

The enzyme catalyses GTP + 4 H2O = 2,5-diamino-6-hydroxy-4-(5-phosphoribosylamino)-pyrimidine + formate + 2 phosphate + 3 H(+). The protein operates within cofactor biosynthesis; riboflavin biosynthesis; 5-amino-6-(D-ribitylamino)uracil from GTP: step 1/4. Its function is as follows. Catalyzes the conversion of GTP to 2,5-diamino-6-ribosylamino-4(3H)-pyrimidinone 5'-phosphate (DARP), formate and pyrophosphate. The chain is GTP cyclohydrolase-2 from Shewanella baltica (strain OS155 / ATCC BAA-1091).